We begin with the raw amino-acid sequence, 1191 residues long: Pyruvate-flavodoxin oxidoreductase (1191 aa).

2 consecutive 4Fe-4S ferredoxin-type domains span residues 687–716 (QVCSWDADLCIQCNKCVMVCPHAALRVKAV) and 744–773 (YVLALSPEDCTGCGICVEACPGKDKATGAR). Residues C696, C699, C702, C706, C753, C756, C759, C763, C825, C828, C853, and C1085 each contribute to the [4Fe-4S] cluster site.

It belongs to the pyruvate:ferredoxin/flavodoxin oxidoreductase family. The cofactor is [4Fe-4S] cluster.

It catalyses the reaction oxidized [flavodoxin] + pyruvate + CoA + 2 H(+) = reduced [flavodoxin] + acetyl-CoA + CO2. Oxidoreductase required for the transfer of electrons from pyruvate to flavodoxin, which reduces nitrogenase. This Rhodospirillum rubrum (strain ATCC 11170 / ATH 1.1.1 / DSM 467 / LMG 4362 / NCIMB 8255 / S1) protein is Pyruvate-flavodoxin oxidoreductase (nifJ).